A 538-amino-acid polypeptide reads, in one-letter code: ATP-dependent rRNA helicase RRP3 (538 aa).

Positions Met-1–His-11 are enriched in basic residues. The segment at Met-1–Phe-112 is disordered. Residues Lys-34 to Lys-47 show a composition bias toward low complexity. Positions Ala-53–Asp-85 are enriched in acidic residues. Positions Glu-92–Phe-112 are enriched in basic and acidic residues. Positions Lys-110–Glu-138 match the Q motif motif. Residues Ile-141–Val-312 enclose the Helicase ATP-binding domain. ATP is bound at residue Ala-154–Thr-161. Positions Asp-260–Asp-263 match the DEAD box motif. Residues His-336–Met-486 enclose the Helicase C-terminal domain. Basic and acidic residues predominate over residues His-498–Lys-512. The interval His-498 to Gly-538 is disordered. Residues Lys-513 to Arg-528 are compositionally biased toward basic residues.

Belongs to the DEAD box helicase family. DDX47/RRP3 subfamily. Interacts with the SSU processome.

It localises to the nucleus. The enzyme catalyses ATP + H2O = ADP + phosphate + H(+). In terms of biological role, ATP-dependent rRNA helicase required for pre-ribosomal RNA processing. Involved in the maturation of the 35S-pre-rRNA and to its cleavage to mature 18S rRNA. This chain is ATP-dependent rRNA helicase RRP3, found in Pyricularia oryzae (strain 70-15 / ATCC MYA-4617 / FGSC 8958) (Rice blast fungus).